Consider the following 324-residue polypeptide: Adducin-related protein C1289.14 (324 aa).

It belongs to the aldolase class II family. Adducin subfamily.

The polypeptide is Adducin-related protein C1289.14 (Schizosaccharomyces pombe (strain 972 / ATCC 24843) (Fission yeast)).